The following is a 530-amino-acid chain: Probable basic-leucine zipper transcription factor L (530 aa).

Composition is skewed to low complexity over residues M1–S17 and S24–S39. The interval M1–K76 is disordered. The 64-residue stretch at V55–L118 folds into the bZIP domain. The tract at residues K56–K77 is basic motif. Residues L83–I104 are leucine-zipper. Disordered stretches follow at residues N142–V177, S216–P258, and H389–N481. Low complexity-rich tracts occupy residues R149–P176 and N220–N247. Positions L248–T257 are enriched in polar residues. Positions S436 to S478 are enriched in low complexity.

It belongs to the bZIP family.

Its subcellular location is the nucleus. Probable transcriptional regulator. The chain is Probable basic-leucine zipper transcription factor L (bzpL) from Dictyostelium discoideum (Social amoeba).